Consider the following 889-residue polypeptide: DNA gyrase subunit A (889 aa).

The region spanning 35-501 (LPDVRDGLKP…GFEDLEDEDL (467 aa)) is the Topo IIA-type catalytic domain. The active-site O-(5'-phospho-DNA)-tyrosine intermediate is Tyr-123. A GyrA-box motif is present at residues 528-534 (QNRGGRG). A disordered region spans residues 811–889 (KEDAEDETNE…IQQSSDEDEE (79 aa)). Residues 813–823 (DAEDETNEDEQ) show a composition bias toward acidic residues. Positions 863–875 (DGRIEVRQDFMDR) are enriched in basic and acidic residues. Acidic residues predominate over residues 876–889 (VEEDIQQSSDEDEE).

The protein belongs to the type II topoisomerase GyrA/ParC subunit family. As to quaternary structure, heterotetramer, composed of two GyrA and two GyrB chains. In the heterotetramer, GyrA contains the active site tyrosine that forms a transient covalent intermediate with DNA, while GyrB binds cofactors and catalyzes ATP hydrolysis.

Its subcellular location is the cytoplasm. The enzyme catalyses ATP-dependent breakage, passage and rejoining of double-stranded DNA.. In terms of biological role, a type II topoisomerase that negatively supercoils closed circular double-stranded (ds) DNA in an ATP-dependent manner to modulate DNA topology and maintain chromosomes in an underwound state. Negative supercoiling favors strand separation, and DNA replication, transcription, recombination and repair, all of which involve strand separation. Also able to catalyze the interconversion of other topological isomers of dsDNA rings, including catenanes and knotted rings. Type II topoisomerases break and join 2 DNA strands simultaneously in an ATP-dependent manner. In Staphylococcus aureus (strain Mu50 / ATCC 700699), this protein is DNA gyrase subunit A.